The sequence spans 349 residues: Adenine deaminase (349 aa).

His-24, His-26, and His-204 together coordinate Zn(2+). Glu-207 acts as the Proton donor in catalysis. Asp-285 contacts Zn(2+). A substrate-binding site is contributed by Asp-286.

The protein belongs to the metallo-dependent hydrolases superfamily. Adenosine and AMP deaminases family. Adenine deaminase type 2 subfamily. Zn(2+) serves as cofactor.

It catalyses the reaction adenine + H2O + H(+) = hypoxanthine + NH4(+). Functionally, catalyzes the hydrolytic deamination of adenine to hypoxanthine. Plays an important role in the purine salvage pathway and in nitrogen catabolism. The sequence is that of Adenine deaminase from Trichlorobacter lovleyi (strain ATCC BAA-1151 / DSM 17278 / SZ) (Geobacter lovleyi).